Here is a 242-residue protein sequence, read N- to C-terminus: MTDLSTLRFFRTPAHGCSYLEDRQASTLFVDPQAALSPELYSELSLLGFRRSGDYLYRPHCDSCNACIPARVRVDDFLPRRRHRRILKHNADLTVHREPARFSRELYTLYAAYINDRHGDGDMYPPSEEQFTNFLTCEWADTHFYGFREKGKLLAVAVTDQLNDGLSAVYTFFDPTLPERSLGVMALLWQIEQCQRLRLPYLYLGYWIRQCQKMSYKNQYQPLEILASGSWKEQSEPNDSGD.

The protein belongs to the R-transferase family. Bpt subfamily.

It is found in the cytoplasm. It catalyses the reaction N-terminal L-glutamyl-[protein] + L-leucyl-tRNA(Leu) = N-terminal L-leucyl-L-glutamyl-[protein] + tRNA(Leu) + H(+). The enzyme catalyses N-terminal L-aspartyl-[protein] + L-leucyl-tRNA(Leu) = N-terminal L-leucyl-L-aspartyl-[protein] + tRNA(Leu) + H(+). Its function is as follows. Functions in the N-end rule pathway of protein degradation where it conjugates Leu from its aminoacyl-tRNA to the N-termini of proteins containing an N-terminal aspartate or glutamate. In Alcanivorax borkumensis (strain ATCC 700651 / DSM 11573 / NCIMB 13689 / SK2), this protein is Aspartate/glutamate leucyltransferase.